Reading from the N-terminus, the 363-residue chain is Flagellar P-ring protein (363 aa).

The first 20 residues, 1 to 20, serve as a signal peptide directing secretion; sequence MKLKLFLLSVLLLVSGSSQA.

Belongs to the FlgI family. The basal body constitutes a major portion of the flagellar organelle and consists of four rings (L,P,S, and M) mounted on a central rod.

It localises to the periplasm. It is found in the bacterial flagellum basal body. Its function is as follows. Assembles around the rod to form the L-ring and probably protects the motor/basal body from shearing forces during rotation. This chain is Flagellar P-ring protein, found in Shewanella woodyi (strain ATCC 51908 / MS32).